A 344-amino-acid chain; its full sequence is GDSL esterase/lipase At1g73610 (344 aa).

The N-terminal stretch at Met-1 to Ala-24 is a signal peptide. Residue Asn-30 is glycosylated (N-linked (GlcNAc...) asparagine). Ser-42 serves as the catalytic Nucleophile. Catalysis depends on residues Asp-319 and His-322.

This sequence belongs to the 'GDSL' lipolytic enzyme family.

It localises to the secreted. In Arabidopsis thaliana (Mouse-ear cress), this protein is GDSL esterase/lipase At1g73610.